The sequence spans 129 residues: Small ribosomal subunit protein uS11 (129 aa).

It belongs to the universal ribosomal protein uS11 family. As to quaternary structure, part of the 30S ribosomal subunit. Interacts with proteins S7 and S18. Binds to IF-3.

Located on the platform of the 30S subunit, it bridges several disparate RNA helices of the 16S rRNA. Forms part of the Shine-Dalgarno cleft in the 70S ribosome. The sequence is that of Small ribosomal subunit protein uS11 from Pasteurella multocida (strain Pm70).